The chain runs to 349 residues: Histone-lysine N-methyltransferase ATXR6 (349 aa).

The tract at residues 1–28 is disordered; the sequence is MVAVRRRRTQASNPRSEPPQHMSDHDSD. The PHD-type zinc finger occupies 32 to 82; sequence DTVCEECSSGKQPAKLLLCDKCDKGFHLFCLRPILVSVPKGSWFCPSCSKH. Positions 92–99 match the PIP motif motif; it reads QTKIIDFF. Residues 105–126 are disordered; that stretch reads PDSSQISSSSDSIGKKRKKTSL. Residues 106-116 show a composition bias toward low complexity; sequence DSSQISSSSDS. Substrate is bound at residue Met-190. The SET domain maps to 214–337; sequence PPLMVVFDPY…KGERLYYDYN (124 aa). S-adenosyl-L-methionine contacts are provided by residues 224-226 and 287-291; these read EGF and RFISG. Residues Arg-309 and 339-340 contribute to the substrate site; that span reads YE. S-adenosyl-L-methionine is bound by residues Tyr-343 and Val-349.

It belongs to the class V-like SAM-binding methyltransferase superfamily. Histone-lysine methyltransferase family. TRX/MLL subfamily. As to quaternary structure, interacts with PCNA1 and PCNA2. Interacts (via PHD domain) with HTR1 (via N-terminus). Interacts with IPS1. In terms of tissue distribution, expressed in leaves, roots, stems, flowers and siliques. Up-regulated in tissues where cell division is active.

The protein resides in the nucleus. It carries out the reaction L-lysyl(27)-[histone H3] + S-adenosyl-L-methionine = N(6)-methyl-L-lysyl(27)-[histone H3] + S-adenosyl-L-homocysteine + H(+). In terms of biological role, histone methyltransferase that specifically monomethylates 'Lys-27' of histone H3 (H3K27me1). Has higher activity on nucleosomes containing H3.1 than H3.3. Involved in the formation of constitutive heterochromatin and the silencing of heterochromatic elements. May act as a positive regulator of the G1-S transition. Influences which sets of rRNA gene variants are expressed or silenced. Up-regulated by E2FB. The protein is Histone-lysine N-methyltransferase ATXR6 (ATXR6) of Arabidopsis thaliana (Mouse-ear cress).